Consider the following 219-residue polypeptide: MISGVSALPFVRVRQHVNPLAQKYLTPANPLEWEKAYSTPHQPLHLDIGCARGRFVLQMAQVEPNWNFLGLEIRESLVIEANQFRSQLGLTNLHYLYCNANNSLQPLLSSLPTGILQRVTIQFPDPWFKTRHAKRRVVQPELVQDIANYLAVGGVVFLQSDMEFVAVEMCDRFAANPAFKKVGTGEWLTENPLPVATERETTTQNRGEPVYRALFERSS.

S-adenosyl-L-methionine is bound by residues D47, E72, N99, and D125. Residue D125 is part of the active site. Residues K129 and D161 each contribute to the substrate site.

The protein belongs to the class I-like SAM-binding methyltransferase superfamily. TrmB family.

It carries out the reaction guanosine(46) in tRNA + S-adenosyl-L-methionine = N(7)-methylguanosine(46) in tRNA + S-adenosyl-L-homocysteine. The protein operates within tRNA modification; N(7)-methylguanine-tRNA biosynthesis. Functionally, catalyzes the formation of N(7)-methylguanine at position 46 (m7G46) in tRNA. The protein is tRNA (guanine-N(7)-)-methyltransferase of Nostoc sp. (strain PCC 7120 / SAG 25.82 / UTEX 2576).